A 322-amino-acid chain; its full sequence is Transaldolase (322 aa).

The active-site Schiff-base intermediate with substrate is the lysine 132. Serine 268 and serine 269 each carry phosphoserine.

This sequence belongs to the transaldolase family. Type 1 subfamily. Homodimer.

It catalyses the reaction D-sedoheptulose 7-phosphate + D-glyceraldehyde 3-phosphate = D-erythrose 4-phosphate + beta-D-fructose 6-phosphate. The protein operates within carbohydrate degradation; pentose phosphate pathway; D-glyceraldehyde 3-phosphate and beta-D-fructose 6-phosphate from D-ribose 5-phosphate and D-xylulose 5-phosphate (non-oxidative stage): step 2/3. Transaldolase is important for the balance of metabolites in the pentose-phosphate pathway. The protein is Transaldolase (tal1) of Schizosaccharomyces pombe (strain 972 / ATCC 24843) (Fission yeast).